The chain runs to 242 residues: DNA repair protein RecO (242 aa).

This sequence belongs to the RecO family. In terms of assembly, monomer.

In terms of biological role, involved in DNA repair and RecF pathway recombination. In Shigella boydii serotype 18 (strain CDC 3083-94 / BS512), this protein is DNA repair protein RecO.